Consider the following 259-residue polypeptide: Undecaprenyl-diphosphatase 4 (259 aa).

The next 8 helical transmembrane spans lie at 1–21 (MNWL…FLPI), 39–59 (AGLF…FIYY), 71–91 (FSKL…IGLL), 99–119 (ISKT…FLYV), 133–153 (ITYK…FPAI), 173–193 (AAYF…ILQF), 208–228 (SLIV…SWMI), and 239–259 (FAYY…TDVF).

This sequence belongs to the UppP family.

The protein localises to the cell membrane. The enzyme catalyses di-trans,octa-cis-undecaprenyl diphosphate + H2O = di-trans,octa-cis-undecaprenyl phosphate + phosphate + H(+). Its function is as follows. Catalyzes the dephosphorylation of undecaprenyl diphosphate (UPP). Confers resistance to bacitracin. The chain is Undecaprenyl-diphosphatase 4 from Bacillus thuringiensis subsp. konkukian (strain 97-27).